The primary structure comprises 594 residues: UvrABC system protein C (594 aa).

The GIY-YIG domain occupies 13-99 (NSSGVYQYFD…IKQLKPKYNI (87 aa)). A UVR domain is found at 205–240 (DRLIKELELKMERLSSKLRFEEALIYRDRIAKIQKI).

Belongs to the UvrC family. Interacts with UvrB in an incision complex.

It is found in the cytoplasm. Its function is as follows. The UvrABC repair system catalyzes the recognition and processing of DNA lesions. UvrC both incises the 5' and 3' sides of the lesion. The N-terminal half is responsible for the 3' incision and the C-terminal half is responsible for the 5' incision. This is UvrABC system protein C from Helicobacter pylori (strain P12).